A 200-amino-acid polypeptide reads, in one-letter code: UPF0316 protein SACOL1973 (200 aa).

3 helical membrane-spanning segments follow: residues 8–28 (PWLMVLTIFIINVCYVTFLTM), 40–60 (IAASVSFLEVLVYIVGLGLVM), and 66–86 (IQNIIAYAFGFSIGIIVGMKI).

It belongs to the UPF0316 family.

Its subcellular location is the cell membrane. This chain is UPF0316 protein SACOL1973, found in Staphylococcus aureus (strain COL).